The sequence spans 506 residues: TOM1-like protein 3 (506 aa).

The VHS domain occupies 12–141 (ATNDMLIGPD…ELRSAGIEFP (130 aa)). The GAT domain maps to 180–268 (DASALSMEEI…VLQHHDDKAK (89 aa)). 3 disordered regions span residues 266–328 (KAKG…PPSS), 351–384 (ETFE…SKSP), and 398–477 (EQLP…PEDI). Residues 288 to 298 (DDDDDESDDDF) are compositionally biased toward acidic residues. Serine 294 carries the phosphoserine modification. Residues 358–368 (PPSTSQSSNHD) are compositionally biased toward polar residues. The residue at position 383 (serine 383) is a Phosphoserine. Positions 450 to 460 (QSRNLSLNPTA) are enriched in polar residues. The segment covering 468 to 477 (PKKDDKPEDI) has biased composition (basic and acidic residues).

It belongs to the TOM1 family. In terms of tissue distribution, preferentially expressed in cauline leaves.

It localises to the membrane. Functionally, might contribute to the loading of the ESCRT machinery. The protein is TOM1-like protein 3 of Arabidopsis thaliana (Mouse-ear cress).